Here is a 153-residue protein sequence, read N- to C-terminus: MKKKVNIRILDKRFGKEFFLPKYFTDGSSGMDLRACIDKEINLNPNETVLISTGVSIDISDQKISGLILPRSGLSHKYGIILSNTIGLIDSDYQGPIMISMLNRSNKNFLISIGDRIAQIIFVPLIQIEWNIVNKFVKITNRKDMGFGHSGKN.

Residues 71 to 73 (RSG), asparagine 84, 88 to 90 (LID), and methionine 98 each bind substrate.

It belongs to the dUTPase family. Requires Mg(2+) as cofactor.

The catalysed reaction is dUTP + H2O = dUMP + diphosphate + H(+). It participates in pyrimidine metabolism; dUMP biosynthesis; dUMP from dCTP (dUTP route): step 2/2. In terms of biological role, this enzyme is involved in nucleotide metabolism: it produces dUMP, the immediate precursor of thymidine nucleotides and it decreases the intracellular concentration of dUTP so that uracil cannot be incorporated into DNA. This is Deoxyuridine 5'-triphosphate nucleotidohydrolase from Wigglesworthia glossinidia brevipalpis.